A 275-amino-acid chain; its full sequence is Large ribosomal subunit protein uL2 (275 aa).

2 disordered regions span residues 35–55 (EKQT…RHKG) and 223–260 (VAMN…KTRN). Polar residues predominate over residues 39 to 49 (RSSGRNNQGRV).

It belongs to the universal ribosomal protein uL2 family. Part of the 50S ribosomal subunit. Forms a bridge to the 30S subunit in the 70S ribosome.

In terms of biological role, one of the primary rRNA binding proteins. Required for association of the 30S and 50S subunits to form the 70S ribosome, for tRNA binding and peptide bond formation. It has been suggested to have peptidyltransferase activity; this is somewhat controversial. Makes several contacts with the 16S rRNA in the 70S ribosome. This chain is Large ribosomal subunit protein uL2, found in Methylococcus capsulatus (strain ATCC 33009 / NCIMB 11132 / Bath).